The chain runs to 367 residues: Voltage-gated potassium channel subunit beta-2 (367 aa).

Phosphoserine occurs at positions 9, 14, and 20. An Asymmetric dimethylarginine; alternate modification is found at Arg28. Arg28 carries the omega-N-methylarginine; alternate modification. Residue Ser31 is modified to Phosphoserine. Residues Thr56, Trp57, Gln63, and Asp85 each coordinate NADP(+). Residue Tyr90 is the Proton donor/acceptor of the active site. Ser112 carries the phosphoserine modification. N6-acetyllysine is present on Lys124. Residues Asn158, Ser188, Arg189, Gln214, Trp243, Ser244, Pro245, Leu246, Ala247, Cys248, Lys254, Tyr262, Arg264, Gly323, Ser325, Gln329, Glu332, and Asn333 each contribute to the NADP(+) site.

Belongs to the shaker potassium channel beta subunit family. Homotetramer. Interaction with tetrameric potassium channel alpha subunits gives rise to a heterooctamer. Identified in potassium channel complexes containing KCNA1, KCNA2, KCNA4, KCNA5, KCNA6, KCNAB1, KCNAB2 and KCND3. Interacts (in unphosphorylated form) with MAPRE1. Forms a ternary complex with SQSTM1 and PRKCZ. Post-translationally, phosphorylated by PRKCZ; may be regulated by incorporation in a complex composed of PRKCZ and SQSTM1. Detected in the juxtaparanodal region of nodes of Ranvier in myelinated nerve fibers in the spinal cord (at protein level).

Its subcellular location is the cytoplasm. The protein localises to the membrane. It localises to the cell membrane. The protein resides in the cell projection. It is found in the axon. Its subcellular location is the synapse. The protein localises to the synaptosome. It localises to the cytoskeleton. The enzyme catalyses hydroxyacetone + NADP(+) = methylglyoxal + NADPH + H(+). It carries out the reaction (E)-4-oxonon-2-en-1-ol + NADP(+) = (E)-4-oxonon-2-enal + NADPH + H(+). Functionally, regulatory subunit of the voltage-gated potassium (Kv) Shaker channels composed of pore-forming and potassium-conducting alpha subunits and of regulatory beta subunits. The beta-2/KCNAB2 cytoplasmic subunit promotes potassium channel closure via a mechanism that does not involve physical obstruction of the channel pore. Promotes the inactivation of Kv1.4/KCNA4 and Kv1.5/KCNA5 alpha subunit-containing channels. Displays nicotinamide adenine dinucleotide phosphate (NADPH)-dependent aldoketoreductase activity by catalyzing the NADPH-dependent reduction of a wide range of aldehyde and ketone substrates. Substrate specificity includes methylglyoxal, 9,10-phenanthrenequinone, prostaglandin J2, 4-nitrobenzaldehyde, 4-nitroacetophenone and 4-oxo-trans-2-nonenal (in vitro, no physiological substrate identified yet). The binding of oxidized and reduced nucleotide alters Kv channel gating and may contribute to dynamic fine tuning of cell excitability. Contributes to the regulation of nerve signaling, and prevents neuronal hyperexcitability. This Bos taurus (Bovine) protein is Voltage-gated potassium channel subunit beta-2 (KCNAB2).